Consider the following 394-residue polypeptide: Zinc finger and SCAN domain-containing protein 9 (394 aa).

A Glycyl lysine isopeptide (Lys-Gly) (interchain with G-Cter in SUMO2) cross-link involves residue Lys26. Residues 52–134 (RRHFRQLCYQ…ILLEDLEREL (83 aa)) form the SCAN box domain. Glycyl lysine isopeptide (Lys-Gly) (interchain with G-Cter in SUMO2) cross-links involve residues Lys215 and Lys238. C2H2-type zinc fingers lie at residues 254-276 (HKCDECGKSFTQSSGLIRHQRIH), 282-304 (YECNECGKAFSRSSGLFNHRGIH), 310-332 (YHCKECGKVFSQSAGLIQHQRIH), 338-360 (YQCSQCSKSYSRRSFLIEHQRSH), and 366-388 (HQCIECGKSFNRHCNLIRHQKIH).

It belongs to the krueppel C2H2-type zinc-finger protein family.

It localises to the nucleus. Its function is as follows. May be involved in transcriptional regulation. The chain is Zinc finger and SCAN domain-containing protein 9 (ZSCAN9) from Homo sapiens (Human).